The following is a 507-amino-acid chain: ATP synthase subunit alpha, chloroplastic (507 aa).

ATP is bound at residue 170 to 177 (GDRQTGKT).

The protein belongs to the ATPase alpha/beta chains family. In terms of assembly, F-type ATPases have 2 components, CF(1) - the catalytic core - and CF(0) - the membrane proton channel. CF(1) has five subunits: alpha(3), beta(3), gamma(1), delta(1), epsilon(1). CF(0) has four main subunits: a, b, b' and c.

It is found in the plastid. The protein localises to the chloroplast thylakoid membrane. It catalyses the reaction ATP + H2O + 4 H(+)(in) = ADP + phosphate + 5 H(+)(out). Functionally, produces ATP from ADP in the presence of a proton gradient across the membrane. The alpha chain is a regulatory subunit. The protein is ATP synthase subunit alpha, chloroplastic of Vitis vinifera (Grape).